The following is a 321-amino-acid chain: Glucokinase (321 aa).

Residue 10-15 (GDIGGT) coordinates ATP.

This sequence belongs to the bacterial glucokinase family.

It localises to the cytoplasm. The catalysed reaction is D-glucose + ATP = D-glucose 6-phosphate + ADP + H(+). This is Glucokinase from Marinobacter nauticus (strain ATCC 700491 / DSM 11845 / VT8) (Marinobacter aquaeolei).